Consider the following 272-residue polypeptide: Shikimate dehydrogenase (NADP(+)) (272 aa).

Shikimate-binding positions include 14-16 (SKS) and Thr-61. Lys-65 serves as the catalytic Proton acceptor. Glu-77 provides a ligand contact to NADP(+). Shikimate contacts are provided by Asn-86 and Asp-102. NADP(+) is bound by residues 126 to 130 (GAGGA), 149 to 154 (NRTASR), and Met-213. Tyr-215 is a shikimate binding site. Residue Gly-237 coordinates NADP(+).

It belongs to the shikimate dehydrogenase family. Homodimer.

It catalyses the reaction shikimate + NADP(+) = 3-dehydroshikimate + NADPH + H(+). Its pathway is metabolic intermediate biosynthesis; chorismate biosynthesis; chorismate from D-erythrose 4-phosphate and phosphoenolpyruvate: step 4/7. Its function is as follows. Involved in the biosynthesis of the chorismate, which leads to the biosynthesis of aromatic amino acids. Catalyzes the reversible NADPH linked reduction of 3-dehydroshikimate (DHSA) to yield shikimate (SA). This is Shikimate dehydrogenase (NADP(+)) from Salmonella paratyphi A (strain ATCC 9150 / SARB42).